Consider the following 559-residue polypeptide: Non-homologous end joining factor IFFO1 (559 aa).

The tract at residues 21–57 (GPLGDSLGGDHFAGGGDLPPAPLSPAGPAAYSPPGPG) is disordered. Residues 39–57 (PPAPLSPAGPAAYSPPGPG) show a composition bias toward pro residues. The tract at residues 65–116 (ALRNDLGSNINVLKTLNLRFRCFLAKVHELERRNRLLEKQLQQALEEGKQGR) is LMNA binding. The region spanning 73-526 (NINVLKTLNL…RLITQSGDRK (454 aa)) is the IF rod domain. Residues 85–117 (RCFLAKVHELERRNRLLEKQLQQALEEGKQGRR) adopt a coiled-coil conformation. Residues 158 to 187 (SPARSPAGPLAPSAASLSSSSTSTSTTYSS) are disordered. The stretch at 237-301 (EIRALYNVLA…LKVEQLKAEL (65 aa)) forms a coiled coil. A disordered region spans residues 360–394 (SMGGRKRERKAAVEEDTSLSESEGPRQPDGDEEES). An XCCR4 binding. Required for localization to the double-strand breaks (DSBs) region spans residues 450 to 525 (EQEDSLEKVI…RRLITQSGDR (76 aa)). Positions 455 to 501 (LEKVIKDTESLFKTREKEYQETIDQIELELATAKNDMNRHLHEYMEM) form a coiled coil. Residues 520–559 (TQSGDRKSPAFTAVPLSDPPPPPSEAEDSDRDVSSDSSMR) are disordered. The segment covering 550-559 (RDVSSDSSMR) has biased composition (basic and acidic residues).

The protein belongs to the intermediate filament family. As to quaternary structure, forms a heterotetramer with XRCC4. The interaction with XRCC4 is direct, involves LIG4-free XRCC4 and leads to relocalization of IFFO1 at the double-strand break (DSB) sites. Interacts with LMNA; the interaction forms an interior nucleoskeleton and the recruitment to DNA double-strand breaks. As to expression, ubiquitously expressed.

The protein localises to the nucleus. The protein resides in the nucleoplasm. Its subcellular location is the nucleus inner membrane. It is found in the nucleus matrix. Functionally, nuclear matrix protein involved in the immobilization of broken DNA ends and the suppression of chromosome translocation during DNA double-strand breaks (DSBs). Interacts with the nuclear lamina component LMNA, resulting in the formation of a nucleoskeleton that relocalizes to the DSB sites in a XRCC4-dependent manner and promotes the immobilization of the broken ends, thereby preventing chromosome translocation. Acts as a scaffold that allows the DNA repair protein XRCC4 and LMNA to assemble into a complex at the DSB sites. The polypeptide is Non-homologous end joining factor IFFO1 (Homo sapiens (Human)).